A 234-amino-acid polypeptide reads, in one-letter code: uncharacterized protein (234 aa).

10 to 34 (VVTGASSGIGASIAETLANQGVKVV) lines the NADP(+) pocket. Residue Ser-143 coordinates substrate. Catalysis depends on Tyr-156, which acts as the Proton acceptor.

This sequence belongs to the short-chain dehydrogenases/reductases (SDR) family.

This is an uncharacterized protein from Staphylococcus saprophyticus subsp. saprophyticus (strain ATCC 15305 / DSM 20229 / NCIMB 8711 / NCTC 7292 / S-41).